A 174-amino-acid chain; its full sequence is Pituitary tumor-transforming gene 1 protein-interacting protein (174 aa).

The signal sequence occupies residues 1–29; the sequence is MASAVLGLTLRWVMFLSAVLLLLLPGASA. Topologically, residues 30–93 are extracellular; that stretch reads QEPPGVGCSE…RWGVCWVNFE (64 aa). Residues 36 to 89 enclose the PSI domain; that stretch reads GCSEYTNRSCEECLRNVSCLWCNENKACLDYPVRKILPPASLCKLSSARWGVCW. N-linked (GlcNAc...) asparagine glycosylation is found at Asn-42 and Asn-51. A helical membrane pass occupies residues 94-114; that stretch reads ALIITMSVLGGSVLLGITVCC. Residues 115–174 lie on the Cytoplasmic side of the membrane; that stretch reads CCCCRRKRSRKPDKSDERAMREQEERRVRQEERRAEMKSRHDEIRKKYGLFKEQNPYEKF. Residues 126–155 form a disordered region; it reads PDKSDERAMREQEERRVRQEERRAEMKSRH. Residues 127–163 adopt a coiled-coil conformation; it reads DKSDERAMREQEERRVRQEERRAEMKSRHDEIRKKYG. Tyr-171 bears the Phosphotyrosine mark.

As to quaternary structure, interacts with PTTG1.

Its subcellular location is the cell membrane. The protein localises to the cytoplasm. It is found in the nucleus. May facilitate PTTG1 nuclear translocation. This is Pituitary tumor-transforming gene 1 protein-interacting protein (Pttg1ip) from Rattus norvegicus (Rat).